Consider the following 290-residue polypeptide: 4-hydroxy-tetrahydrodipicolinate synthase (290 aa).

T48 contributes to the pyruvate binding site. Residue Y137 is the Proton donor/acceptor of the active site. The active-site Schiff-base intermediate with substrate is the K165. I206 is a binding site for pyruvate.

The protein belongs to the DapA family. Homotetramer; dimer of dimers.

Its subcellular location is the cytoplasm. It carries out the reaction L-aspartate 4-semialdehyde + pyruvate = (2S,4S)-4-hydroxy-2,3,4,5-tetrahydrodipicolinate + H2O + H(+). Its pathway is amino-acid biosynthesis; L-lysine biosynthesis via DAP pathway; (S)-tetrahydrodipicolinate from L-aspartate: step 3/4. Catalyzes the condensation of (S)-aspartate-beta-semialdehyde [(S)-ASA] and pyruvate to 4-hydroxy-tetrahydrodipicolinate (HTPA). The polypeptide is 4-hydroxy-tetrahydrodipicolinate synthase (Enterococcus faecalis (strain ATCC 700802 / V583)).